A 724-amino-acid chain; its full sequence is Catalase-peroxidase (724 aa).

Residues 98–226 constitute a cross-link (tryptophyl-tyrosyl-methioninium (Trp-Tyr) (with M-252)); sequence WHSAGSYRIA…LAAVMMGLIY (129 aa). Residue His99 is the Proton acceptor of the active site. A cross-link (tryptophyl-tyrosyl-methioninium (Tyr-Met) (with W-98)) is located at residues 226 to 252; that stretch reads YVNPEGVDGHPDPQKTANDVRVTFARM. A heme b-binding site is contributed by His267.

This sequence belongs to the peroxidase family. Peroxidase/catalase subfamily. Homodimer or homotetramer. Heme b serves as cofactor. Post-translationally, formation of the three residue Trp-Tyr-Met cross-link is important for the catalase, but not the peroxidase activity of the enzyme.

The catalysed reaction is H2O2 + AH2 = A + 2 H2O. The enzyme catalyses 2 H2O2 = O2 + 2 H2O. Functionally, bifunctional enzyme with both catalase and broad-spectrum peroxidase activity. The protein is Catalase-peroxidase of Edwardsiella tarda.